A 432-amino-acid chain; its full sequence is Glutamate-1-semialdehyde 2,1-aminomutase (432 aa).

Lys272 bears the N6-(pyridoxal phosphate)lysine mark.

It belongs to the class-III pyridoxal-phosphate-dependent aminotransferase family. HemL subfamily. As to quaternary structure, homodimer. It depends on pyridoxal 5'-phosphate as a cofactor.

The protein resides in the cytoplasm. The enzyme catalyses (S)-4-amino-5-oxopentanoate = 5-aminolevulinate. It participates in porphyrin-containing compound metabolism; protoporphyrin-IX biosynthesis; 5-aminolevulinate from L-glutamyl-tRNA(Glu): step 2/2. It functions in the pathway porphyrin-containing compound metabolism; chlorophyll biosynthesis. The polypeptide is Glutamate-1-semialdehyde 2,1-aminomutase (Nostoc punctiforme (strain ATCC 29133 / PCC 73102)).